The sequence spans 411 residues: 3-phosphoshikimate 1-carboxyvinyltransferase (411 aa).

Residues K20, S21, and R25 each contribute to the 3-phosphoshikimate site. K20 contacts phosphoenolpyruvate. 2 residues coordinate phosphoenolpyruvate: G86 and R114. 6 residues coordinate 3-phosphoshikimate: S156, S157, Q158, S181, D295, and K322. Position 158 (Q158) interacts with phosphoenolpyruvate. The Proton acceptor role is filled by D295. Phosphoenolpyruvate contacts are provided by R326, R367, and K393.

The protein belongs to the EPSP synthase family. Monomer.

Its subcellular location is the cytoplasm. The enzyme catalyses 3-phosphoshikimate + phosphoenolpyruvate = 5-O-(1-carboxyvinyl)-3-phosphoshikimate + phosphate. Its pathway is metabolic intermediate biosynthesis; chorismate biosynthesis. Functionally, catalyzes the transfer of the enolpyruvyl moiety of phosphoenolpyruvate (PEP) to the 5-hydroxyl of shikimate-3-phosphate (S3P) to produce enolpyruvyl shikimate-3-phosphate and inorganic phosphate. This is 3-phosphoshikimate 1-carboxyvinyltransferase from Picrophilus torridus (strain ATCC 700027 / DSM 9790 / JCM 10055 / NBRC 100828 / KAW 2/3).